The primary structure comprises 280 residues: Protein lyl-1 (280 aa).

Residues 1-60 form a disordered region; the sequence is MCPPQAQAEVGPTMTEKAEMVCAPSPAPAPPPKPASPGPPQVEEVGHRGGSSPPRLPPGV. Pro residues predominate over residues 25 to 40; sequence SPAPAPPPKPASPGPP. The bHLH domain maps to 150–202; the sequence is ARRVFTNSRERWRQQNVNGAFAELRKLLPTHPPDRKLSKNEVLRLAMKYIGFL. The segment at 214-280 is disordered; sequence AAGPTPPGPR…EQTALSPEVR (67 aa). Basic and acidic residues predominate over residues 229-245; the sequence is RVPDDGARRGSGRRAEA. Residues 257–267 are compositionally biased toward low complexity; sequence PDGSPGGAARP. Phosphoserine is present on residues serine 260 and serine 276.

In terms of assembly, efficient DNA binding requires dimerization with another bHLH protein.

The protein resides in the nucleus. The protein is Protein lyl-1 (LYL1) of Homo sapiens (Human).